A 311-amino-acid polypeptide reads, in one-letter code: Methionyl-tRNA formyltransferase (311 aa).

Residue 109 to 112 (SLLP) participates in (6S)-5,6,7,8-tetrahydrofolate binding.

The protein belongs to the Fmt family.

The catalysed reaction is L-methionyl-tRNA(fMet) + (6R)-10-formyltetrahydrofolate = N-formyl-L-methionyl-tRNA(fMet) + (6S)-5,6,7,8-tetrahydrofolate + H(+). Its function is as follows. Attaches a formyl group to the free amino group of methionyl-tRNA(fMet). The formyl group appears to play a dual role in the initiator identity of N-formylmethionyl-tRNA by promoting its recognition by IF2 and preventing the misappropriation of this tRNA by the elongation apparatus. The chain is Methionyl-tRNA formyltransferase from Acetivibrio thermocellus (strain ATCC 27405 / DSM 1237 / JCM 9322 / NBRC 103400 / NCIMB 10682 / NRRL B-4536 / VPI 7372) (Clostridium thermocellum).